The primary structure comprises 992 residues: Probable translation initiation factor IF-2 (992 aa).

The DOD-type homing endonuclease domain occupies 96 to 220; sequence KNWHGVTVTP…LSLALLRFGI (125 aa). Residues 399-616 enclose the tr-type G domain; that stretch reads TTETHNFIAN…LIAGLSQRYL (218 aa). Residues 472-476 and 526-529 each bind GTP; these read DTPGH and NKID.

Belongs to the TRAFAC class translation factor GTPase superfamily. Classic translation factor GTPase family. IF-2 subfamily. This protein undergoes a protein self splicing that involves a post-translational excision of the intervening region (intein) followed by peptide ligation.

Function in general translation initiation by promoting the binding of the formylmethionine-tRNA to ribosomes. Seems to function along with eIF-2. This is Probable translation initiation factor IF-2 (infB) from Pyrococcus abyssi (strain GE5 / Orsay).